A 208-amino-acid polypeptide reads, in one-letter code: MATLKANKRTDFKRSTLQKIRHSGHVPGVIYGKNTDNLAVSLDSIDLLKTLRDEGKNTIITLDVNGETKSVMVTELQTDPLKNELVHADFQVVDLQREIEADVPVQLIGESKGVKDGGVLQQPLFELSITAKPKDIPQHIEADITNLEVNDVLTVADLPVQSSYQVNNDPEEVVASILPPQQSEVPEPDSEEEPKEPEAIKEKDNDGE.

Residues leucine 178–glutamate 208 are disordered. Over residues proline 186–lysine 195 the composition is skewed to acidic residues. Over residues glutamate 196–glutamate 208 the composition is skewed to basic and acidic residues.

This sequence belongs to the bacterial ribosomal protein bL25 family. CTC subfamily. As to quaternary structure, part of the 50S ribosomal subunit; part of the 5S rRNA/L5/L18/L25 subcomplex. Contacts the 5S rRNA. Binds to the 5S rRNA independently of L5 and L18.

Its function is as follows. This is one of the proteins that binds to the 5S RNA in the ribosome where it forms part of the central protuberance. This is Large ribosomal subunit protein bL25 from Bacillus pumilus (strain SAFR-032).